A 461-amino-acid polypeptide reads, in one-letter code: Steroidogenic factor 1 (461 aa).

Positions 10-85 (DELCPVCGDK…VGMRLEAVRA (76 aa)) form a DNA-binding region, nuclear receptor. Residues 13–33 (CPVCGDKVSGYHYGLLTCESC) form an NR C4-type zinc finger. 3 positions are modified to N6-acetyllysine: K34, K38, and K72. The segment at 49–73 (CTESQSCKIDKTLRKRCPFCRFQKC) adopts an NR C4-type zinc-finger fold. Residue K119 forms a Glycyl lysine isopeptide (Lys-Gly) (interchain with G-Cter in SUMO) linkage. The disordered stretch occupies residues 119–153 (KLETGPPMGVPPPPPPPPDYMLPPGLHVPEPKGLA). The segment covering 126-139 (MGVPPPPPPPPDYM) has biased composition (pro residues). Residue K194 forms a Glycyl lysine isopeptide (Lys-Gly) (interchain with G-Cter in SUMO) linkage. Position 203 is a phosphoserine; by CDK7 (S203). The 238-residue stretch at 222-459 (GVPELILQLL…NLLIEMLQAK (238 aa)) folds into the NR LBD domain. A 1,2-diacyl-sn-glycero-3-phosphocholine contacts are provided by G341, Y436, and K440.

It belongs to the nuclear hormone receptor family. NR5 subfamily. In terms of assembly, binds DNA as a monomer. Part of a complex consisting of SFPQ, NONO and NR5A1. Interacts with NR0B2. Interacts with DGKQ and CDK7. Binds to and activated by HIPK3. Acetylation stimulates the transcriptional activity. In terms of processing, sumoylation reduces CDK7-mediated phosphorylation on Ser-203. Post-translationally, phosphorylated on Ser-203 by CDK7. This phosphorylation promotes transcriptional activity.

It localises to the nucleus. Functionally, transcriptional activator. Seems to be essential for sexual differentiation and formation of the primary steroidogenic tissues. Binds to the Ad4 site found in the promoter region of steroidogenic P450 genes such as CYP11A, CYP11B and CYP21B. Also regulates the AMH/Muellerian inhibiting substance gene as well as the AHCH and STAR genes. 5'-YCAAGGYC-3' and 5'-RRAGGTCA-3' are the consensus sequences for the recognition by NR5A1. The SFPQ-NONO-NR5A1 complex binds to the CYP17 promoter and regulates basal and cAMP-dependent transcriptional activity. Binds phospholipids with a phosphatidylinositol (PI) headgroup, in particular PI(3,4)P2 and PI(3,4,5)P3. Activated by the phosphorylation of NR5A1 by HIPK3 leading to increased steroidogenic gene expression upon cAMP signaling pathway stimulation. The chain is Steroidogenic factor 1 (NR5A1) from Equus caballus (Horse).